The chain runs to 261 residues: Glutamate racemase (261 aa).

Residues 7–8 and 39–40 each bind substrate; these read DS and YG. Cys71 functions as the Proton donor/acceptor in the catalytic mechanism. 72–73 contributes to the substrate binding site; that stretch reads NT. The Proton donor/acceptor role is filled by Cys184. Residue 185 to 186 coordinates substrate; it reads TH.

Belongs to the aspartate/glutamate racemases family.

It carries out the reaction L-glutamate = D-glutamate. It participates in cell wall biogenesis; peptidoglycan biosynthesis. In terms of biological role, provides the (R)-glutamate required for cell wall biosynthesis. In Aliarcobacter butzleri (strain RM4018) (Arcobacter butzleri), this protein is Glutamate racemase.